Reading from the N-terminus, the 257-residue chain is 1-(5-phosphoribosyl)-5-[(5-phosphoribosylamino)methylideneamino] imidazole-4-carboxamide isomerase (257 aa).

D8 acts as the Proton acceptor in catalysis. The Proton donor role is filled by D129.

It belongs to the HisA/HisF family.

Its subcellular location is the cytoplasm. The catalysed reaction is 1-(5-phospho-beta-D-ribosyl)-5-[(5-phospho-beta-D-ribosylamino)methylideneamino]imidazole-4-carboxamide = 5-[(5-phospho-1-deoxy-D-ribulos-1-ylimino)methylamino]-1-(5-phospho-beta-D-ribosyl)imidazole-4-carboxamide. Its pathway is amino-acid biosynthesis; L-histidine biosynthesis; L-histidine from 5-phospho-alpha-D-ribose 1-diphosphate: step 4/9. In Rippkaea orientalis (strain PCC 8801 / RF-1) (Cyanothece sp. (strain PCC 8801)), this protein is 1-(5-phosphoribosyl)-5-[(5-phosphoribosylamino)methylideneamino] imidazole-4-carboxamide isomerase.